Here is a 382-residue protein sequence, read N- to C-terminus: 26S proteasome non-ATPase regulatory subunit 6 (382 aa).

One can recognise a PCI domain in the interval 186–354 (QFKEASDLYL…GVIETTRSDA (169 aa)).

This sequence belongs to the proteasome subunit S10 family.

Its function is as follows. Acts as a regulatory subunit of the 26S proteasome which is involved in the ATP-dependent degradation of ubiquitinated proteins. The chain is 26S proteasome non-ATPase regulatory subunit 6 (psmD6) from Dictyostelium discoideum (Social amoeba).